The chain runs to 72 residues: Translation initiation factor IF-1 (72 aa).

The region spanning 1–72 is the S1-like domain; it reads MAKEDNIEMQ…SKGRIVFRSR (72 aa).

The protein belongs to the IF-1 family. In terms of assembly, component of the 30S ribosomal translation pre-initiation complex which assembles on the 30S ribosome in the order IF-2 and IF-3, IF-1 and N-formylmethionyl-tRNA(fMet); mRNA recruitment can occur at any time during PIC assembly.

It is found in the cytoplasm. One of the essential components for the initiation of protein synthesis. Stabilizes the binding of IF-2 and IF-3 on the 30S subunit to which N-formylmethionyl-tRNA(fMet) subsequently binds. Helps modulate mRNA selection, yielding the 30S pre-initiation complex (PIC). Upon addition of the 50S ribosomal subunit IF-1, IF-2 and IF-3 are released leaving the mature 70S translation initiation complex. This Salmonella paratyphi A (strain ATCC 9150 / SARB42) protein is Translation initiation factor IF-1.